The following is a 43-amino-acid chain: Cytochrome b559 subunit beta (43 aa).

A helical transmembrane segment spans residues 18 to 34 (WLAIHGLAIPTVFFFGA). Heme is bound at residue H22.

It belongs to the PsbE/PsbF family. As to quaternary structure, heterodimer of an alpha subunit and a beta subunit. PSII is composed of 1 copy each of membrane proteins PsbA, PsbB, PsbC, PsbD, PsbE, PsbF, PsbH, PsbI, PsbJ, PsbK, PsbL, PsbM, PsbT, PsbY, PsbZ, Psb30/Ycf12, at least 3 peripheral proteins of the oxygen-evolving complex and a large number of cofactors. It forms dimeric complexes. Heme b serves as cofactor.

Its subcellular location is the plastid. It is found in the chloroplast thylakoid membrane. In terms of biological role, this b-type cytochrome is tightly associated with the reaction center of photosystem II (PSII). PSII is a light-driven water:plastoquinone oxidoreductase that uses light energy to abstract electrons from H(2)O, generating O(2) and a proton gradient subsequently used for ATP formation. It consists of a core antenna complex that captures photons, and an electron transfer chain that converts photonic excitation into a charge separation. In Cyanidium caldarium (Red alga), this protein is Cytochrome b559 subunit beta.